We begin with the raw amino-acid sequence, 520 residues long: Transactivator/viroplasmin protein (520 aa).

Disordered regions lie at residues 103–126 and 487–520; these read SDFLRPHQGIPIPPKPEPSSSVAP and EDASADSGPKDGPPPTRSIVEKEDVPTTSSKQVD.

It belongs to the caulimoviridae viroplasmin family.

The protein resides in the host cytoplasm. Its function is as follows. Enhances the ribosomal termination-reinitiation event leading to the translation of major open reading frames on the polycistronic viral RNAs. This chain is Transactivator/viroplasmin protein, found in Arabidopsis thaliana (Mouse-ear cress).